The chain runs to 173 residues: Large ribosomal subunit protein bL9 (173 aa).

Belongs to the bacterial ribosomal protein bL9 family.

Binds to the 23S rRNA. The protein is Large ribosomal subunit protein bL9 of Rickettsia bellii (strain OSU 85-389).